A 158-amino-acid polypeptide reads, in one-letter code: Chromobox protein homolog 7 (158 aa).

A Chromo domain is found at 11-69 (FAVESIRKKRVRKGKVEYLVKWKGWPPKYSTWEPEEHILDPRLVMAYEEKEEKDRASGY). Residues 60-124 (KEEKDRASGY…PPPWTPMLPS (65 aa)) form a disordered region. The span at 68-78 (GYRKRGPKPKR) shows a compositional bias: basic residues.

In terms of assembly, component of a PRC1-like complex. Distinct PRC1-like core complexes are composed of a RING1 subunit (RING1B or RING1A), one of the six PCGF proteins (PCGF1-6), one PHC protein (PHC1-3) and one of the CBX proteins (CBX2, CBX4, CBX6, CBX7 or CBX8). The composition of the PRC1 complex may differ between the PRC1 complex in pluripotent embryonic stem cells containing RNF2, CBX7 and PCGF2, and the PRC1 complex in differentiating cells containing RNF2, CBX2, CBX4 and BMI1. Interacts with RING1. Interacts with RNF2/RING1B. Interacts with PCGF1, PCGF2, PCGF3, PCGF5 and PCGF6. Interacts (via chromodomain) with histone H3K9Me3 and H3K27me3. Interacts with H3K9Me2 and H4K20Me1. Interacts (via chromodomain) with single-stranded and double-stranded RNA; RNA binding seems to be required for the localization to chromatin.

The protein localises to the nucleus. Its subcellular location is the chromosome. Functionally, component of a Polycomb group (PcG) multiprotein PRC1-like complex, a complex class required to maintain the transcriptionally repressive state of many genes, including Hox genes, throughout development. PcG PRC1 complex acts via chromatin remodeling and modification of histones; it mediates monoubiquitination of histone H2A 'Lys-119', rendering chromatin heritably changed in its expressibility. Promotes histone H3 trimethylation at 'Lys-9' (H3K9me3). Binds to histone H3 trimethylated 'Lys-9' (H3K9me3) or at 'Lys-27' (H3K27me3). May possibly also bind trimethylated lysine residues in other proteins (in vitro). Binds non-coding, single-stranded and double-stranded RNA. Plays a role in the timely repression of differentiation-specific genes in pluripotent embryonic stem cells to maintain the undifferentiated state. Regulator of cellular lifespan by maintaining the repression of CDKN2A, but not by inducing telomerase activity. The polypeptide is Chromobox protein homolog 7 (Cbx7) (Rattus norvegicus (Rat)).